A 718-amino-acid chain; its full sequence is Effector protein hopM1 (718 aa).

Over residues 1-10 the composition is skewed to gly residues; the sequence is MIGTRVGGSG. Disordered stretches follow at residues 1–63 and 683–718; these read MIGT…ARLP and GVSSLRDAHKPAETSSPTADDAAAVELTAMEEGRRR. The span at 11–22 shows a compositional bias: polar residues; that stretch reads STEIVQANQPQP. The span at 44 to 60 shows a compositional bias: low complexity; that stretch reads ASQSAAQAPESSAAGAA.

In terms of assembly, interacts with the chaperone ShcM.

The protein localises to the secreted. It is found in the host membrane. In terms of biological role, involved in the suppression of basal resistance and promotion of disease symptoms in plants. May be involved in the inhibition of a host vesicle trafficking pathway. The protein is Effector protein hopM1 (hopM1) of Pseudomonas syringae pv. syringae (strain B728a).